The sequence spans 275 residues: Phosphate import ATP-binding protein PstB (275 aa).

An ABC transporter domain is found at methionine 28–isoleucine 270. An ATP-binding site is contributed by glycine 60–serine 67.

This sequence belongs to the ABC transporter superfamily. Phosphate importer (TC 3.A.1.7) family. As to quaternary structure, the complex is composed of two ATP-binding proteins (PstB), two transmembrane proteins (PstC and PstA) and a solute-binding protein (PstS).

The protein resides in the cell inner membrane. The enzyme catalyses phosphate(out) + ATP + H2O = ADP + 2 phosphate(in) + H(+). Its function is as follows. Part of the ABC transporter complex PstSACB involved in phosphate import. Responsible for energy coupling to the transport system. The polypeptide is Phosphate import ATP-binding protein PstB (Novosphingobium aromaticivorans (strain ATCC 700278 / DSM 12444 / CCUG 56034 / CIP 105152 / NBRC 16084 / F199)).